A 92-amino-acid polypeptide reads, in one-letter code: RNA-binding protein Hfq (92 aa).

One can recognise a Sm domain in the interval 9-68 (DPFLNALRRERVPVSIYLVNGIKLQGQVESFDQFVILLKNTVSQMVYKHAISTVVPSRPF).

It belongs to the Hfq family. In terms of assembly, homohexamer.

In terms of biological role, RNA chaperone that binds small regulatory RNA (sRNAs) and mRNAs to facilitate mRNA translational regulation in response to envelope stress, environmental stress and changes in metabolite concentrations. Also binds with high specificity to tRNAs. The sequence is that of RNA-binding protein Hfq from Shewanella halifaxensis (strain HAW-EB4).